A 298-amino-acid chain; its full sequence is Urease accessory protein UreD (298 aa).

Belongs to the UreD family. As to quaternary structure, ureD, UreF and UreG form a complex that acts as a GTP-hydrolysis-dependent molecular chaperone, activating the urease apoprotein by helping to assemble the nickel containing metallocenter of UreC. The UreE protein probably delivers the nickel.

It is found in the cytoplasm. Its function is as follows. Required for maturation of urease via the functional incorporation of the urease nickel metallocenter. The protein is Urease accessory protein UreD of Marinobacter nauticus (strain ATCC 700491 / DSM 11845 / VT8) (Marinobacter aquaeolei).